The following is a 516-amino-acid chain: MEELQGYLKKNGSPQQHFLYPLLLQEYIYTLAHDHGLNSSIFYESIEFIGYDNKSSLVLVKRLITRMYQQNLFIYSVNDSNQNRFGGHTNFFYSHFFYSQMVSESFSVIVEIPFSLRLVSSLEEEEKEIPKSQNLRSIHSIFPFLEDKLFHLNNVSDILIPHPIHLEILVQTLQYWIQDVPSLHLLRFFLHKYHNLNSFIQNNKTIYVFSKENKRLFWFLYNSYVSECEFLFVFIRKKSCYLRSTSSGAFLERSHFYGKKEHIIVVCCNNFQKTLCPVKDLFMHYVRYQGKAILASRGTHLLMKKWRYYLVNFWQYYFHFWSQPYRMQINPLLNYSFYFMGYLSSVLINPYAVKNQMLENSFLIDTDINKFDTIIPGIPLIGSLSKVKFCTVSGHPISKPGWADLSDFDIIDRFGRICRNLSHYHSGSSKKQTLYRIKYILRLSCARTLARKHKSTARALLQRLGSGLVEEFFTEEEQFISFIFPKTTPFPLHGSHRERIWSLDIIRVNDLVNQII.

This sequence belongs to the intron maturase 2 family. MatK subfamily.

The protein localises to the plastid. Its subcellular location is the chloroplast. In terms of biological role, usually encoded in the trnK tRNA gene intron. Probably assists in splicing its own and other chloroplast group II introns. In Medeola virginiana (Indian cucumber root), this protein is Maturase K.